Consider the following 787-residue polypeptide: Protocadherin beta-15 (787 aa).

The N-terminal stretch at methionine 1–alanine 26 is a signal peptide. Residues glycine 27–leucine 690 lie on the Extracellular side of the membrane. Cadherin domains lie at valine 35 to phenylalanine 133, isoleucine 138 to phenylalanine 242, tyrosine 247 to leucine 347, leucine 352 to phenylalanine 451, and tyrosine 456 to valine 561. Residues asparagine 418 and asparagine 436 are each glycosylated (N-linked (GlcNAc...) asparagine). The N-linked (GlcNAc...) asparagine glycan is linked to asparagine 567. The region spanning glycine 568 to leucine 671 is the Cadherin 6 domain. Residues valine 691–valine 711 form a helical membrane-spanning segment. The Cytoplasmic segment spans residues arginine 712–glutamate 787.

It localises to the cell membrane. In terms of biological role, potential calcium-dependent cell-adhesion protein. May be involved in the establishment and maintenance of specific neuronal connections in the brain. The chain is Protocadherin beta-15 (PCDHB15) from Pan troglodytes (Chimpanzee).